Here is a 179-residue protein sequence, read N- to C-terminus: Translation initiation factor IF-3 (179 aa).

The protein belongs to the IF-3 family. As to quaternary structure, monomer.

It localises to the cytoplasm. Its function is as follows. IF-3 binds to the 30S ribosomal subunit and shifts the equilibrium between 70S ribosomes and their 50S and 30S subunits in favor of the free subunits, thus enhancing the availability of 30S subunits on which protein synthesis initiation begins. This is Translation initiation factor IF-3 from Leptospira interrogans serogroup Icterohaemorrhagiae serovar copenhageni (strain Fiocruz L1-130).